The chain runs to 376 residues: N-acetyldiaminopimelate deacetylase (376 aa).

Residue aspartate 69 is part of the active site. The Proton acceptor role is filled by glutamate 128.

Belongs to the peptidase M20A family. N-acetyldiaminopimelate deacetylase subfamily.

The catalysed reaction is N-acetyl-(2S,6S)-2,6-diaminopimelate + H2O = (2S,6S)-2,6-diaminopimelate + acetate. The protein operates within amino-acid biosynthesis; L-lysine biosynthesis via DAP pathway; LL-2,6-diaminopimelate from (S)-tetrahydrodipicolinate (acetylase route): step 3/3. Catalyzes the conversion of N-acetyl-diaminopimelate to diaminopimelate and acetate. The polypeptide is N-acetyldiaminopimelate deacetylase (Streptococcus pneumoniae (strain Taiwan19F-14)).